The following is a 231-amino-acid chain: Putative N-acetylmannosamine-6-phosphate 2-epimerase (231 aa).

It belongs to the NanE family.

It catalyses the reaction an N-acyl-D-glucosamine 6-phosphate = an N-acyl-D-mannosamine 6-phosphate. It functions in the pathway amino-sugar metabolism; N-acetylneuraminate degradation; D-fructose 6-phosphate from N-acetylneuraminate: step 3/5. Its function is as follows. Converts N-acetylmannosamine-6-phosphate (ManNAc-6-P) to N-acetylglucosamine-6-phosphate (GlcNAc-6-P). In Latilactobacillus sakei subsp. sakei (strain 23K) (Lactobacillus sakei subsp. sakei), this protein is Putative N-acetylmannosamine-6-phosphate 2-epimerase.